Consider the following 551-residue polypeptide: Cation/acetate symporter ActP (551 aa).

14 helical membrane passes run 8–28 (ALAA…TGAV), 35–55 (WQAI…TYWA), 78–98 (GLAI…SALV), 105–125 (GLIY…LIAE), 151–171 (LSAC…MVGA), 185–205 (VAVV…GMLA), 208–228 (WVQI…AFMV), 264–284 (ISAL…PHIL), 305–325 (GFMG…IMLV), 357–377 (LFLG…VAGL), 406–426 (VSKI…ILFE), 430–450 (IAFM…PIIL), 465–485 (VGGW…PTIW), and 496–516 (FPYE…IWVF).

The protein belongs to the sodium:solute symporter (SSF) (TC 2.A.21) family.

Its subcellular location is the cell inner membrane. Transports acetate. This chain is Cation/acetate symporter ActP, found in Klebsiella pneumoniae (strain 342).